Consider the following 343-residue polypeptide: 4-hydroxy-2-oxovalerate aldolase 1 (343 aa).

One can recognise a Pyruvate carboxyltransferase domain in the interval 8–260 (ITVHDMSLRD…ETGVDVFAIS (253 aa)). 16–17 (RD) lines the substrate pocket. Mn(2+) is bound at residue Asp-17. Residue His-20 is the Proton acceptor of the active site. 2 residues coordinate substrate: Ser-170 and His-199. Mn(2+)-binding residues include His-199 and His-201. Tyr-290 contacts substrate.

This sequence belongs to the 4-hydroxy-2-oxovalerate aldolase family.

It carries out the reaction (S)-4-hydroxy-2-oxopentanoate = acetaldehyde + pyruvate. In Burkholderia cenocepacia (strain ATCC BAA-245 / DSM 16553 / LMG 16656 / NCTC 13227 / J2315 / CF5610) (Burkholderia cepacia (strain J2315)), this protein is 4-hydroxy-2-oxovalerate aldolase 1 (bphI).